We begin with the raw amino-acid sequence, 188 residues long: dCTP deaminase (188 aa).

DCTP is bound by residues 111-116 (KSTYAR), 135-137 (TLE), Gln-156, Tyr-170, and Gln-180. Glu-137 serves as the catalytic Proton donor/acceptor.

It belongs to the dCTP deaminase family. In terms of assembly, homotrimer.

The catalysed reaction is dCTP + H2O + H(+) = dUTP + NH4(+). Its pathway is pyrimidine metabolism; dUMP biosynthesis; dUMP from dCTP (dUTP route): step 1/2. In terms of biological role, catalyzes the deamination of dCTP to dUTP. In Neisseria meningitidis serogroup B (strain ATCC BAA-335 / MC58), this protein is dCTP deaminase.